Consider the following 325-residue polypeptide: Phosphatidylglycerol--prolipoprotein diacylglyceryl transferase (325 aa).

Helical transmembrane passes span 19–39 (IPLRGYAFCIIIGVFVAVWFG), 47–67 (GGKAGTVADVAVWAVPFGLVG), 93–113 (IWEGGLGIWGAIAFGAVGAWI), and 119–139 (GIPLPAWADALAPGIAIAQAI). Residue R141 participates in a 1,2-diacyl-sn-glycero-3-phospho-(1'-sn-glycerol) binding. The next 3 helical transmembrane spans lie at 175-195 (HPTFLYESLWCIGVALLVIWA), 207-225 (FALYVAGYCAGRGWIEYMR), and 237-257 (LNVWTAIVVFILAVVYIVISA). Basic and acidic residues predominate over residues 266-312 (IVEPDRDATPAEKDGSGEDGSGEKGVAKADAAAKDPLTKDEPGKDAT). The disordered stretch occupies residues 266–325 (IVEPDRDATPAEKDGSGEDGSGEKGVAKADAAAKDPLTKDEPGKDATAENAGAAGAAEKA). The span at 313–325 (AENAGAAGAAEKA) shows a compositional bias: low complexity.

This sequence belongs to the Lgt family.

The protein localises to the cell membrane. The enzyme catalyses L-cysteinyl-[prolipoprotein] + a 1,2-diacyl-sn-glycero-3-phospho-(1'-sn-glycerol) = an S-1,2-diacyl-sn-glyceryl-L-cysteinyl-[prolipoprotein] + sn-glycerol 1-phosphate + H(+). It functions in the pathway protein modification; lipoprotein biosynthesis (diacylglyceryl transfer). In terms of biological role, catalyzes the transfer of the diacylglyceryl group from phosphatidylglycerol to the sulfhydryl group of the N-terminal cysteine of a prolipoprotein, the first step in the formation of mature lipoproteins. The chain is Phosphatidylglycerol--prolipoprotein diacylglyceryl transferase from Streptomyces griseus subsp. griseus (strain JCM 4626 / CBS 651.72 / NBRC 13350 / KCC S-0626 / ISP 5235).